The sequence spans 239 residues: Sugar fermentation stimulation protein homolog (239 aa).

The protein belongs to the SfsA family.

This is Sugar fermentation stimulation protein homolog from Desulforamulus reducens (strain ATCC BAA-1160 / DSM 100696 / MI-1) (Desulfotomaculum reducens).